A 23-amino-acid polypeptide reads, in one-letter code: NADP-dependent malic enzyme (23 aa).

Belongs to the malic enzymes family. Homotetramer.

The enzyme catalyses (S)-malate + NADP(+) = pyruvate + CO2 + NADPH. The catalysed reaction is oxaloacetate + H(+) = pyruvate + CO2. This Populus euphratica (Euphrates poplar) protein is NADP-dependent malic enzyme.